The chain runs to 401 residues: Elongation factor Tu (401 aa).

In terms of domain architecture, tr-type G spans 10–211 (KPHLNVGTIG…ALDTFVPNPK (202 aa)). Residues 19–26 (GHVDHGKT) are G1. 19 to 26 (GHVDHGKT) serves as a coordination point for GTP. Residue threonine 26 participates in Mg(2+) binding. The interval 62-66 (GITIA) is G2. The segment at 83-86 (DCPG) is G3. GTP-binding positions include 83-87 (DCPGH) and 138-141 (NKAD). Residues 138–141 (NKAD) are G4. Residues 179-181 (SAV) form a G5 region.

The protein belongs to the TRAFAC class translation factor GTPase superfamily. Classic translation factor GTPase family. EF-Tu/EF-1A subfamily. As to quaternary structure, monomer.

Its subcellular location is the cytoplasm. It catalyses the reaction GTP + H2O = GDP + phosphate + H(+). Its function is as follows. GTP hydrolase that promotes the GTP-dependent binding of aminoacyl-tRNA to the A-site of ribosomes during protein biosynthesis. The protein is Elongation factor Tu of Leptospira interrogans serogroup Icterohaemorrhagiae serovar copenhageni (strain Fiocruz L1-130).